We begin with the raw amino-acid sequence, 181 residues long: Der GTPase-activating protein YihI (181 aa).

The tract at residues 1–73 (MSRIKKARKP…DPRIGSKKPI (73 aa)) is disordered. Positions 22–32 (NRTDRDVESRE) are enriched in basic and acidic residues. The span at 33-42 (LKRKRKRKGL) shows a compositional bias: basic residues. Positions 55–67 (QARRNAQKKDPRI) are enriched in basic and acidic residues.

It belongs to the YihI family. Interacts with Der.

In terms of biological role, a GTPase-activating protein (GAP) that modifies Der/EngA GTPase function. May play a role in ribosome biogenesis. The polypeptide is Der GTPase-activating protein YihI (Aliivibrio fischeri (strain MJ11) (Vibrio fischeri)).